We begin with the raw amino-acid sequence, 96 residues long: Secretoglobin family 2B member 2 (96 aa).

A signal peptide spans 1–23; it reads MRVTSATCALLLALICSVQLGDA.

This sequence belongs to the secretoglobin family.

It localises to the secreted. The sequence is that of Secretoglobin family 2B member 2 (SCGB2B2) from Homo sapiens (Human).